The chain runs to 402 residues: Coiled-coil domain-containing protein 188 (402 aa).

3 disordered regions span residues 1 to 30 (MEGL…GGGL), 50 to 74 (HSVQ…EGEA), and 108 to 131 (HPGS…PCPC). A coiled-coil region spans residues 154-189 (GLLGSAEQSFLQLEQENHSLKRQNQELREQLGALLG). A helical transmembrane segment spans residues 347-363 (LLLGALLVWTAAYVYVV).

The protein resides in the membrane. This is Coiled-coil domain-containing protein 188 from Homo sapiens (Human).